A 526-amino-acid polypeptide reads, in one-letter code: DDB1- and CUL4-associated factor 17 (526 aa).

The next 2 helical transmembrane spans lie at 200–220 and 237–257; these read ILMR…MLEI and GVLA…EYIV.

Its subcellular location is the membrane. The protein resides in the nucleus. It is found in the nucleolus. Its pathway is protein modification; protein ubiquitination. Its function is as follows. May function as a substrate receptor for CUL4-DDB1 E3 ubiquitin-protein ligase complex. This Danio rerio (Zebrafish) protein is DDB1- and CUL4-associated factor 17 (dcaf17).